The sequence spans 76 residues: DNA-directed RNA polymerase subunit epsilon (76 aa).

This sequence belongs to the RNA polymerase subunit epsilon family. In terms of assembly, RNAP is composed of a core of 2 alpha, a beta and a beta' subunit. The core is associated with a delta subunit, and at least one of epsilon or omega. When a sigma factor is associated with the core the holoenzyme is formed, which can initiate transcription.

It carries out the reaction RNA(n) + a ribonucleoside 5'-triphosphate = RNA(n+1) + diphosphate. A non-essential component of RNA polymerase (RNAP). This chain is DNA-directed RNA polymerase subunit epsilon, found in Streptococcus sanguinis (strain SK36).